The sequence spans 540 residues: 2-isopropylmalate synthase (540 aa).

Residues 8–273 (VLIFDTTLRD…FFGRDEDSPT (266 aa)) form the Pyruvate carboxyltransferase domain. 4 residues coordinate Mn(2+): D17, H208, H210, and N244. The tract at residues 408 to 540 (QLKLVQVSCG…MAQLDSSPVH (133 aa)) is regulatory domain.

Belongs to the alpha-IPM synthase/homocitrate synthase family. LeuA type 1 subfamily. In terms of assembly, homodimer. Mn(2+) serves as cofactor.

The protein localises to the cytoplasm. The catalysed reaction is 3-methyl-2-oxobutanoate + acetyl-CoA + H2O = (2S)-2-isopropylmalate + CoA + H(+). It functions in the pathway amino-acid biosynthesis; L-leucine biosynthesis; L-leucine from 3-methyl-2-oxobutanoate: step 1/4. Its function is as follows. Catalyzes the condensation of the acetyl group of acetyl-CoA with 3-methyl-2-oxobutanoate (2-ketoisovalerate) to form 3-carboxy-3-hydroxy-4-methylpentanoate (2-isopropylmalate). The chain is 2-isopropylmalate synthase from Synechococcus sp. (strain CC9311).